The chain runs to 327 residues: GTPase Obg (327 aa).

Residues 3-160 (NKFTDFIKIY…FIFVLELKIL (158 aa)) enclose the Obg domain. An OBG-type G domain is found at 161-327 (ADVGLIGLPN…LIYYICNILS (167 aa)). Residues 167-174 (GLPNSGKS), 192-196 (FTTLN), 214-217 (DIPG), 281-284 (SKSD), and 308-310 (SSF) contribute to the GTP site. Residues S174 and T194 each contribute to the Mg(2+) site.

Belongs to the TRAFAC class OBG-HflX-like GTPase superfamily. OBG GTPase family. In terms of assembly, monomer. It depends on Mg(2+) as a cofactor.

Its subcellular location is the cytoplasm. Functionally, an essential GTPase which binds GTP, GDP and possibly (p)ppGpp with moderate affinity, with high nucleotide exchange rates and a fairly low GTP hydrolysis rate. Plays a role in control of the cell cycle, stress response, ribosome biogenesis and in those bacteria that undergo differentiation, in morphogenesis control. In Karelsulcia muelleri (strain GWSS) (Sulcia muelleri), this protein is GTPase Obg.